A 400-amino-acid polypeptide reads, in one-letter code: MSGRVGDLSPKQAETLAKFRENVQDVLPALPNPDDYFLLRWLRARNFDLQKSEALLRKYMEFRKTMDIDHILDWQPPEVIQKYMPGGLCGYDRDGCPVWYDIIGPLDPKGLLFSVTKQDLLKTKMRDCERILHECDLQTERLGKKIETIVMIFDCEGLGLKHFWKPLVEVYQEFFGLLEENYPETLKFMLIVKATKLFPVGYNLMKPFLSEDTRRKIIVLGNNWKEGLLKLISPEELPAQFGGTLTDPDGNPKCLTKINYGGEIPKSMYVRDQVKTQYEHSVQINRGSSHQVEYEILFPGCVLRWQFSSDGADIGFGVFLKTKMGERQRAGEMTDVLPSQRYNAHMVPEDGNLTCSEAGVYVLRFDNTYSFVHAKKVSFTVEVLLPDEGMQKYDKELTPV.

In terms of domain architecture, CRAL-TRIO spans 76–249 (PPEVIQKYMP…QFGGTLTDPD (174 aa)). Residues 275-383 (KTQYEHSVQI…AKKVSFTVEV (109 aa)) form the GOLD domain.

Its function is as follows. Probable hydrophobic ligand-binding protein; may play a role in the transport of hydrophobic ligands like tocopherol, squalene and phospholipids. The sequence is that of SEC14-like protein 3 (SEC14L3) from Homo sapiens (Human).